The primary structure comprises 432 residues: MRKNKVDIITLGCSKNLVDSEQLMRQFVANGYTVEHDPHKINGEIVVVNTCGFIGDAQEESINMILELGEQKQKGRIGKLFVMGCLSERFLKDLEKELPEVDRFYGKFNWKELISDLGKSYHQELATDRVLTTPRHYAYVKIGEGCNRTCSYCSIPIITGAYQSRPMDEIVDEVRGLVAQGVKEFQMIAQDLTFYGLDRYKRMALPELVERVSDIPGVEWIRLHYGYPSHFPYDLLPVMRERDNVCKYMDIALQHISDPMLKMMRRNITKAETYELLERMRREVPGIHLRTTLMVGHPGETEQDFEELIRFVKDIRFERMGAFAYSHEEGTYAYQHYKDEIPQEVKQDRLDYLMRVQEGISADVNASKVGQTFRVIVDREEEDFYVGRTQYDSPEVDPEILISKDTPLSPGSFYQVKVIDAQAFDLYGKVLN.

The 119-residue stretch at 4–122 folds into the MTTase N-terminal domain; sequence NKVDIITLGC…LISDLGKSYH (119 aa). The [4Fe-4S] cluster site is built by cysteine 13, cysteine 51, cysteine 85, cysteine 146, cysteine 150, and cysteine 153. The Radical SAM core domain occupies 132–363; the sequence is TTPRHYAYVK…MRVQEGISAD (232 aa). The TRAM domain occupies 366-432; it reads ASKVGQTFRV…AFDLYGKVLN (67 aa).

This sequence belongs to the methylthiotransferase family. RimO subfamily. Requires [4Fe-4S] cluster as cofactor.

The protein localises to the cytoplasm. The catalysed reaction is L-aspartate(89)-[ribosomal protein uS12]-hydrogen + (sulfur carrier)-SH + AH2 + 2 S-adenosyl-L-methionine = 3-methylsulfanyl-L-aspartate(89)-[ribosomal protein uS12]-hydrogen + (sulfur carrier)-H + 5'-deoxyadenosine + L-methionine + A + S-adenosyl-L-homocysteine + 2 H(+). Functionally, catalyzes the methylthiolation of an aspartic acid residue of ribosomal protein uS12. This is Ribosomal protein uS12 methylthiotransferase RimO from Parabacteroides distasonis (strain ATCC 8503 / DSM 20701 / CIP 104284 / JCM 5825 / NCTC 11152).